Consider the following 547-residue polypeptide: Methyl-accepting chemotaxis citrate transducer (547 aa).

Over 1-5 (MKNIK) the chain is Cytoplasmic. The helical transmembrane segment at 6 to 29 (VITGVIATLGIFSALLLVTGILFY) threads the bilayer. At 30–189 (SAVSSDRLNF…ASDQNQSSFT (160 aa)) the chain is on the periplasmic side. The helical transmembrane segment at 190–213 (QMQWTLGIILLIVLIVLAFIWLGL) threads the bilayer. Residues 214-547 (QRVLLRPLQR…AAEQANWESF (334 aa)) lie on the Cytoplasmic side of the membrane. In terms of domain architecture, HAMP spans 215–267 (RVLLRPLQRIMAHIQTIADGDLTHEIEAEGRSEMGQLAAGLKTMQQSLIRTVS). The region spanning 272–501 (NADSIYTGAG…ESAAAAAALE (230 aa)) is the Methyl-accepting transducer domain. Glutamate methyl ester (Gln) is present on Gln296. Glutamate methyl ester (Glu) is present on Glu303. Gln310 carries the glutamate methyl ester (Gln) modification. The tract at residues 317–336 (QNTDNARQATGLAKTASETA) is disordered. Glu492 and Glu501 each carry glutamate methyl ester (Glu). The disordered stretch occupies residues 518-547 (KQPRREASPTTLSKGLTPQPAAEQANWESF).

The protein belongs to the methyl-accepting chemotaxis (MCP) protein family. Post-translationally, methylation level is increased by citrate and decreased by phenol.

The protein resides in the cell inner membrane. Functionally, acts as a receptor for citrate and mediates taxis away from phenol. Also mediates an attractant response to metal-citrate complexes. In Salmonella typhimurium (strain LT2 / SGSC1412 / ATCC 700720), this protein is Methyl-accepting chemotaxis citrate transducer (tcp).